The chain runs to 468 residues: Adenosylhomocysteinase (468 aa).

3 residues coordinate substrate: Thr-57, Asp-132, and Glu-194. 195–197 (TTT) provides a ligand contact to NAD(+). Substrate-binding residues include Lys-224 and Asp-228. NAD(+) is bound by residues Asn-229, 258–263 (GFGDVG), Glu-281, Asn-316, 337–339 (IGH), and Asn-382.

It belongs to the adenosylhomocysteinase family. NAD(+) serves as cofactor.

It localises to the cytoplasm. It catalyses the reaction S-adenosyl-L-homocysteine + H2O = L-homocysteine + adenosine. It functions in the pathway amino-acid biosynthesis; L-homocysteine biosynthesis; L-homocysteine from S-adenosyl-L-homocysteine: step 1/1. Its function is as follows. May play a key role in the regulation of the intracellular concentration of adenosylhomocysteine. The protein is Adenosylhomocysteinase of Methylobacterium sp. (strain 4-46).